Consider the following 281-residue polypeptide: 3-methyl-2-oxobutanoate hydroxymethyltransferase (281 aa).

Mg(2+) is bound by residues Asp-44 and Asp-83. Residues 44 to 45, Asp-83, and Lys-112 contribute to the 3-methyl-2-oxobutanoate site; that span reads DS. Residue Glu-114 coordinates Mg(2+). The Proton acceptor role is filled by Glu-180. The tract at residues 251–281 is disordered; sequence RNGTFPGPEHSSRMDPAELAAALGSQDQATE.

The protein belongs to the PanB family. As to quaternary structure, homodecamer; pentamer of dimers. Requires Mg(2+) as cofactor.

It localises to the cytoplasm. The enzyme catalyses 3-methyl-2-oxobutanoate + (6R)-5,10-methylene-5,6,7,8-tetrahydrofolate + H2O = 2-dehydropantoate + (6S)-5,6,7,8-tetrahydrofolate. The protein operates within cofactor biosynthesis; (R)-pantothenate biosynthesis; (R)-pantoate from 3-methyl-2-oxobutanoate: step 1/2. Catalyzes the reversible reaction in which hydroxymethyl group from 5,10-methylenetetrahydrofolate is transferred onto alpha-ketoisovalerate to form ketopantoate. The polypeptide is 3-methyl-2-oxobutanoate hydroxymethyltransferase (Chloroflexus aurantiacus (strain ATCC 29364 / DSM 637 / Y-400-fl)).